We begin with the raw amino-acid sequence, 494 residues long: Glutamyl-tRNA(Gln) amidotransferase subunit A (494 aa).

Catalysis depends on charge relay system residues Lys80 and Ser155. The active-site Acyl-ester intermediate is Ser179.

The protein belongs to the amidase family. GatA subfamily. Heterotrimer of A, B and C subunits.

The catalysed reaction is L-glutamyl-tRNA(Gln) + L-glutamine + ATP + H2O = L-glutaminyl-tRNA(Gln) + L-glutamate + ADP + phosphate + H(+). Allows the formation of correctly charged Gln-tRNA(Gln) through the transamidation of misacylated Glu-tRNA(Gln) in organisms which lack glutaminyl-tRNA synthetase. The reaction takes place in the presence of glutamine and ATP through an activated gamma-phospho-Glu-tRNA(Gln). The polypeptide is Glutamyl-tRNA(Gln) amidotransferase subunit A (Lachnoclostridium phytofermentans (strain ATCC 700394 / DSM 18823 / ISDg) (Clostridium phytofermentans)).